We begin with the raw amino-acid sequence, 1712 residues long: Latent-transforming growth factor beta-binding protein 1 (1712 aa).

A signal peptide spans 1–23; it reads MAGAWLRWGLLLWAGLLAWSAHG. Residues 65–118 form a disordered region; sequence TAASSRALAGPPAERTRRTSQPGGAALPGLRSPLPPEPARPGGPSRQLHSKAGA. In terms of domain architecture, EGF-like 1 spans 181 to 213; sequence TKPSCVPPCQNGGMCLRPQLCVCKPGSKGKACE. Cystine bridges form between cysteine 185–cysteine 195, cysteine 189–cysteine 201, and cysteine 203–cysteine 212. Asparagine 339 and asparagine 370 each carry an N-linked (GlcNAc...) asparagine glycan. Residues 391–423 form the EGF-like 2 domain; that stretch reads RVVICHLPCMNGGQCSSRDKCQCPPNFTGKLCQ. Disulfide bonds link cysteine 395–cysteine 405, cysteine 399–cysteine 411, cysteine 413–cysteine 422, cysteine 551–cysteine 573, cysteine 560–cysteine 586, and cysteine 574–cysteine 589. N-linked (GlcNAc...) asparagine glycosylation is present at asparagine 416. One can recognise a TB 1 domain in the interval 549–601; that stretch reads GRCFQETIGSQCGKALPGLSKQEDCCGTVGTSWGFNKCQKCPKKQSYHGYTQM. A glycan (N-linked (GlcNAc...) asparagine) is linked at asparagine 612. An EGF-like 3; calcium-binding domain is found at 618–658; the sequence is DINECQLQGVCPNGECLNTMGSYRCSCKMGFGPDPTFSSCV. 7 disulfides stabilise this stretch: cysteine 622/cysteine 633, cysteine 628/cysteine 642, cysteine 644/cysteine 657, cysteine 671/cysteine 694, cysteine 681/cysteine 706, cysteine 695/cysteine 709, and cysteine 696/cysteine 721. O-linked (Glc) serine glycosylation is present at serine 639. Positions 669–721 constitute a TB 2 domain; it reads GPCYRLVSPGRHCMHPLSVHLTKQICCCSVGKAWGPHCEKCPLPGTAAFKEIC. Residues 753 to 799 form a disordered region; that stretch reads NTQPVAKSTHPPPLPAKEEPVEALTSSWEHGPRGAEPEVVTAPPEKE. 2 O-linked (GalNAc...) threonine glycosylation sites follow: threonine 761 and threonine 793. Residues 865–906 enclose the EGF-like 4; calcium-binding domain; sequence EINECTVNPDICGAGHCINLPVRYTCICYEGYKFSEQLRKCV. 37 disulfide bridges follow: cysteine 869–cysteine 881, cysteine 876–cysteine 890, cysteine 892–cysteine 905, cysteine 911–cysteine 923, cysteine 918–cysteine 932, cysteine 934–cysteine 947, cysteine 953–cysteine 964, cysteine 959–cysteine 973, cysteine 976–cysteine 988, cysteine 994–cysteine 1005, cysteine 1000–cysteine 1014, cysteine 1017–cysteine 1028, cysteine 1034–cysteine 1045, cysteine 1040–cysteine 1054, cysteine 1056–cysteine 1069, cysteine 1075–cysteine 1086, cysteine 1081–cysteine 1095, cysteine 1097–cysteine 1110, cysteine 1116–cysteine 1127, cysteine 1122–cysteine 1136, cysteine 1138–cysteine 1151, cysteine 1157–cysteine 1169, cysteine 1164–cysteine 1178, cysteine 1180–cysteine 1192, cysteine 1198–cysteine 1210, cysteine 1204–cysteine 1219, cysteine 1221–cysteine 1234, cysteine 1240–cysteine 1252, cysteine 1246–cysteine 1261, cysteine 1263–cysteine 1276, cysteine 1282–cysteine 1294, cysteine 1289–cysteine 1303, cysteine 1305–cysteine 1319, cysteine 1340–cysteine 1363, cysteine 1350–cysteine 1375, cysteine 1364–cysteine 1380, and cysteine 1365–cysteine 1392. Residues 907 to 948 form the EGF-like 5; calcium-binding domain; that stretch reads DIDECAQVRHLCSQGRCENTEGSFLCVCPAGFMASEEGTNCI. An O-linked (Glc) serine glycan is attached at serine 929. Residues 949–989 enclose the EGF-like 6; calcium-binding domain; that stretch reads DVDECLRPDMCRDGRCINTAGAFRCEYCDSGYRMSRRGYCE. Asparagine 966 carries the (3R)-3-hydroxyasparagine modification. Residues 990–1029 form the EGF-like 7; calcium-binding domain; the sequence is DIDECLKPSTCPEEQCVNTPGSYQCVPCTEGFRGWNGQCL. O-linked (Glc) serine glycosylation is present at serine 1011. Residues 1030–1070 form the EGF-like 8; calcium-binding domain; the sequence is DVDECLQPKVCTNGSCTNLEGSYMCSCHRGYSPTPDHRHCQ. Residue asparagine 1042 is glycosylated (N-linked (GlcNAc...) asparagine). An O-linked (Glc) serine glycan is attached at serine 1051. An EGF-like 9; calcium-binding domain is found at 1071 to 1111; that stretch reads DIDECQQGNLCMNGQCRNTDGSFRCTCGQGYQLSAAKDQCE. The EGF-like 10; calcium-binding domain occupies 1112–1152; that stretch reads DIDECEHHHLCSHGQCRNTEGSFQCVCNQGYRASVLGDHCE. Asparagine 1129 carries the (3R)-3-hydroxyasparagine modification. The O-linked (Glc) serine glycan is linked to serine 1133. An EGF-like 11; calcium-binding domain is found at 1153-1193; that stretch reads DINECLEDSSVCQGGDCINTAGSYDCTCPDGFQLNDNKGCQ. One can recognise an EGF-like 12; calcium-binding domain in the interval 1194 to 1235; the sequence is DINECAQPGLCGSHGECLNTQGSFHCVCEQGFSISADGRTCE. An O-linked (Glc) serine glycan is attached at serine 1216. Residues 1236–1277 form the EGF-like 13; calcium-binding domain; sequence DIDECVNNTVCDSHGFCDNTAGSFRCLCYQGFQAPQDGQGCV. Residue asparagine 1242 is glycosylated (N-linked (GlcNAc...) asparagine). One can recognise an EGF-like 14; calcium-binding domain in the interval 1278–1320; that stretch reads DVNECELLSGVCGEAFCENVEGSFLCVCADENQEYSPMTGQCR. The tract at residues 1335–1402 is 8-Cys3 region; the sequence is EEKKECYYNL…PRGKGLVPAG (68 aa). One can recognise a TB 3 domain in the interval 1338 to 1392; that stretch reads KECYYNLNDASLCDNVLAPNVTKQECCCTSGAGWGDNCEIFPCPVQGTAEFTEMC. N-linked (GlcNAc...) asparagine glycosylation occurs at asparagine 1357. Serine 1405 carries the phosphoserine modification. The 43-residue stretch at 1415 to 1457 folds into the EGF-like 15; calcium-binding domain; the sequence is DADECLLFGEEICKNGYCLNTQPGYECYCKQGTYYDPVKLQCF. Intrachain disulfides connect cysteine 1419/cysteine 1432, cysteine 1427/cysteine 1441, cysteine 1443/cysteine 1456, cysteine 1462/cysteine 1473, cysteine 1468/cysteine 1482, cysteine 1484/cysteine 1497, cysteine 1517/cysteine 1541, cysteine 1527/cysteine 1553, cysteine 1542/cysteine 1556, and cysteine 1543/cysteine 1568. The EGF-like 16; calcium-binding domain maps to 1458–1498; sequence DMDECQDPNSCIDGQCVNTEGSYNCFCTHPMVLDASEKRCV. Residue serine 1479 is glycosylated (O-linked (Glc) serine). The C-terminal domain stretch occupies residues 1498 to 1712; the sequence is VQPTESNEQI…LNLDKESDLE (215 aa). The region spanning 1515–1568 is the TB 4 domain; it reads DLCWEHLSEEYVCSRPLVGKQTTYTECCCLYGEAWGMQCALCPMKDSDDYAQLC. 2 positions are modified to phosphoserine: serine 1588 and serine 1607. The EGF-like 17 domain maps to 1612–1652; the sequence is QAEECGILNGCENGRCVRVQEGYTCDCFDGYHLDMAKMTCV. 6 cysteine pairs are disulfide-bonded: cysteine 1616–cysteine 1627, cysteine 1622–cysteine 1636, cysteine 1638–cysteine 1651, cysteine 1657–cysteine 1672, cysteine 1667–cysteine 1681, and cysteine 1683–cysteine 1696. Residues 1653–1697 enclose the EGF-like 18; calcium-binding domain; that stretch reads DVNECSELNNRMSLCKNAKCINTEGSYKCLCLPGYIPSDKPNYCT. Serine 1678 is a glycosylation site (O-linked (Glc) serine).

It belongs to the LTBP family. As to quaternary structure, interacts with TGFB1; associates via disulfide bonds with the Latency-associated peptide chain (LAP) regulatory chain of TGFB1, leading to regulate activation of TGF-beta-1. LTBP1 does not bind directly to TGF-beta-1, the active chain of TGFB1. Interacts (via C-terminal domain) with FBN1 (via N-terminal domain). Interacts with FBN2. Interacts with ADAMTSL2. Interacts with EFEMP2. Post-translationally, contains hydroxylated asparagine residues. In terms of processing, two intrachain disulfide bonds from the TB3 domain are rearranged upon TGFB1 binding, and form interchain bonds with TGFB1 propeptide, anchoring it to the extracellular matrix. O-glycosylated on serine residues by POGLUT2 and POGLUT3.

It localises to the secreted. It is found in the extracellular space. The protein localises to the extracellular matrix. Its function is as follows. Key regulator of transforming growth factor beta (TGFB1, TGFB2 and TGFB3) that controls TGF-beta activation by maintaining it in a latent state during storage in extracellular space. Associates specifically via disulfide bonds with the Latency-associated peptide (LAP), which is the regulatory chain of TGF-beta, and regulates integrin-dependent activation of TGF-beta. Outcompeted by LRRC32/GARP for binding to LAP regulatory chain of TGF-beta. The chain is Latent-transforming growth factor beta-binding protein 1 from Mus musculus (Mouse).